A 234-amino-acid chain; its full sequence is MAAKIFCLLMLLGLSASAATATIFPQCSQAPIASLLPPYLSPAVSSVCENPILQPYRIQQAIAAGILPLSPLFLQQSSALLQQLPLVHLLAQNIRAQQLQQLVLANLAAYSQQQQFLPFNQLAALNSASYLQQQQLPFSQLPAAYPQQFLPFNQLAALNSPAYLQQQQLLPFSQLAGVSPATFLTQPQLLPFYQHAAPNAGTLLQLQQLLPFNQLALTNLAAFYQQPIIGGALF.

A signal peptide spans Met-1 to Ala-21.

This sequence belongs to the zein family.

Functionally, zeins are major seed storage proteins. The polypeptide is Zein-alpha A30 (Zea mays (Maize)).